Reading from the N-terminus, the 60-residue chain is MAVPKQKRSRSRTHHKRAKIYKAFSVPVSVCPNCGAPKLPHRVCLNCGHYGKKQVFEVAE.

This sequence belongs to the bacterial ribosomal protein bL32 family.

This is Large ribosomal subunit protein bL32 from Thermosipho melanesiensis (strain DSM 12029 / CIP 104789 / BI429).